Reading from the N-terminus, the 21-residue chain is Major outer membrane protein (21 aa).

Disulfide bond interactions within and between MOMP molecules and other components form high molecular-weight oligomers.

It is found in the cell outer membrane. In terms of biological role, structural rigidity of the outer membrane of elementary bodies and porin forming, permitting diffusion of solutes through the intracellular reticulate body membrane. The polypeptide is Major outer membrane protein (Actinobacillus equuli).